A 363-amino-acid polypeptide reads, in one-letter code: Chorismate synthase (363 aa).

Arginine 47 provides a ligand contact to NADP(+). Residues 124-126 (RSS), glycine 285, 300-304 (KPTAT), and arginine 326 contribute to the FMN site.

Belongs to the chorismate synthase family. As to quaternary structure, homotetramer. FMNH2 serves as cofactor.

The catalysed reaction is 5-O-(1-carboxyvinyl)-3-phosphoshikimate = chorismate + phosphate. It participates in metabolic intermediate biosynthesis; chorismate biosynthesis; chorismate from D-erythrose 4-phosphate and phosphoenolpyruvate: step 7/7. Its function is as follows. Catalyzes the anti-1,4-elimination of the C-3 phosphate and the C-6 proR hydrogen from 5-enolpyruvylshikimate-3-phosphate (EPSP) to yield chorismate, which is the branch point compound that serves as the starting substrate for the three terminal pathways of aromatic amino acid biosynthesis. This reaction introduces a second double bond into the aromatic ring system. In Opitutus terrae (strain DSM 11246 / JCM 15787 / PB90-1), this protein is Chorismate synthase.